A 1182-amino-acid polypeptide reads, in one-letter code: Receptor-type guanylate cyclase gcy-19 (1182 aa).

Residues 1 to 24 (MEYLLFLLLFAGFLTFLPRFLIYA) form the signal peptide. Residues 25–507 (QITSSTTTTT…PQSFVDQYGA (483 aa)) are Extracellular-facing. Asn91, Asn369, Asn430, and Asn453 each carry an N-linked (GlcNAc...) asparagine glycan. The chain crosses the membrane as a helical span at residues 508 to 528 (LVFAIGGVLIFAMLFVITCFF). The Cytoplasmic segment spans residues 529 to 1182 (YVMRQKRLER…FRRQETLALI (654 aa)). Residues 562 to 849 (RMSKRSLQSG…KGNLMDHVFN (288 aa)) enclose the Protein kinase domain. The Guanylate cyclase domain maps to 907-1037 (TVFFSDVVKF…DTVNTASRME (131 aa)). The interval 1094–1164 (VSSNSGYQSD…EAKARDIHNE (71 aa)) is disordered. Residues 1142–1152 (SPTLSKRSVSP) show a composition bias toward low complexity.

Belongs to the adenylyl cyclase class-4/guanylyl cyclase family. As to expression, expressed in IL2 sensory neurons.

Its subcellular location is the cell membrane. It catalyses the reaction GTP = 3',5'-cyclic GMP + diphosphate. Guanylate cyclase involved in the production of the second messenger cGMP. The sequence is that of Receptor-type guanylate cyclase gcy-19 from Caenorhabditis elegans.